A 258-amino-acid polypeptide reads, in one-letter code: Acetylglutamate kinase (258 aa).

Residues 44–45 (GG), Arg66, and Asn158 contribute to the substrate site. ATP is bound by residues 181–186 (DVSGIL) and 209–211 (IIT).

This sequence belongs to the acetylglutamate kinase family. ArgB subfamily. As to quaternary structure, homodimer.

It is found in the cytoplasm. The enzyme catalyses N-acetyl-L-glutamate + ATP = N-acetyl-L-glutamyl 5-phosphate + ADP. It participates in amino-acid biosynthesis; L-arginine biosynthesis; N(2)-acetyl-L-ornithine from L-glutamate: step 2/4. Functionally, catalyzes the ATP-dependent phosphorylation of N-acetyl-L-glutamate. The polypeptide is Acetylglutamate kinase (Klebsiella pneumoniae subsp. pneumoniae (strain ATCC 700721 / MGH 78578)).